Here is a 598-residue protein sequence, read N- to C-terminus: Phospholipase B-like protein G (598 aa).

The N-terminal stretch at 1 to 24 (MIKSYYLFFIILIFLIFINNFILC) is a signal peptide. N50, N98, N173, N341, N368, N450, N480, N526, and N576 each carry an N-linked (GlcNAc...) asparagine glycan.

Belongs to the phospholipase B-like family.

It localises to the secreted. In terms of biological role, probable phospholipase. In Dictyostelium discoideum (Social amoeba), this protein is Phospholipase B-like protein G (plbG).